The following is a 97-amino-acid chain: Late embryogenesis abundant protein Lea5 (97 aa).

The protein belongs to the LEA type 3 family.

This chain is Late embryogenesis abundant protein Lea5 (LEA5), found in Citrus sinensis (Sweet orange).